Here is a 561-residue protein sequence, read N- to C-terminus: Putative transport protein YbjL (561 aa).

5 consecutive transmembrane segments (helical) span residues Leu8–Gly28, Leu32–Gln52, Phe66–Phe86, Met94–Phe114, and Asn158–Ala178. RCK C-terminal domains follow at residues Arg200–Asn288 and Val292–Phe373. 5 helical membrane-spanning segments follow: residues Leu383–Phe403, Phe406–Leu426, Phe447–Gly467, Met475–Ala495, and Ala540–Leu560.

It belongs to the AAE transporter (TC 2.A.81) family. YbjL subfamily.

It is found in the cell membrane. The polypeptide is Putative transport protein YbjL (Salmonella dublin (strain CT_02021853)).